Here is a 206-residue protein sequence, read N- to C-terminus: MSYTLPSLPYAYDALEPHFDKQTMEIHHTKHHQTYVNNANAALENLPEFASLPVEELITKLDQVPADKKTVLRNNAGGHANHSLFWKGLKKGTTLQGDLKAAIERDFGSVDNFKAEFEKAAATRFGSGWAWLVLKGDKLAVVSTANQDSPLMGEAISGASGFPILGLDVWEHAYYLKFQNRRPDYIKEFWNVVNWDEAAARFAAKK.

Mn(2+) contacts are provided by His27, His82, Asp168, and His172.

The protein belongs to the iron/manganese superoxide dismutase family. Homodimer. Mn(2+) is required as a cofactor.

The enzyme catalyses 2 superoxide + 2 H(+) = H2O2 + O2. In terms of biological role, destroys superoxide anion radicals which are normally produced within the cells and which are toxic to biological systems. In Salmonella typhimurium (strain LT2 / SGSC1412 / ATCC 700720), this protein is Superoxide dismutase [Mn] (sodA).